The sequence spans 321 residues: Small ribosomal subunit biogenesis GTPase RsgA (321 aa).

The 160-residue stretch at 89–248 (QSWINRPPVA…VADTPGFNRP (160 aa)) folds into the CP-type G domain. GTP-binding positions include 138-141 (TKRD) and 190-198 (GPSGVGKTS). The Zn(2+) site is built by Cys-273, Cys-278, His-280, and Cys-286.

The protein belongs to the TRAFAC class YlqF/YawG GTPase family. RsgA subfamily. As to quaternary structure, monomer. Associates with 30S ribosomal subunit, binds 16S rRNA. Zn(2+) serves as cofactor.

It is found in the cytoplasm. Functionally, one of several proteins that assist in the late maturation steps of the functional core of the 30S ribosomal subunit. Helps release RbfA from mature subunits. May play a role in the assembly of ribosomal proteins into the subunit. Circularly permuted GTPase that catalyzes slow GTP hydrolysis, GTPase activity is stimulated by the 30S ribosomal subunit. The polypeptide is Small ribosomal subunit biogenesis GTPase RsgA (Prochlorococcus marinus (strain MIT 9313)).